A 153-amino-acid chain; its full sequence is Ubiquitin/ISG15-conjugating enzyme E2 L6 (153 aa).

In terms of domain architecture, UBC core spans 2-149; it reads MASMRVVKEL…AEEFTLRFGV (148 aa). Residue Cys86 is the Glycyl thioester intermediate of the active site.

The protein belongs to the ubiquitin-conjugating enzyme family. In terms of assembly, interacts with RNF19A, RNF19B and RNF144B. Interacts with FLT3 (tyrosine phosphorylated). ISGylated. In terms of tissue distribution, present in natural killer cells (at protein level).

The catalysed reaction is S-ubiquitinyl-[E1 ubiquitin-activating enzyme]-L-cysteine + [E2 ubiquitin-conjugating enzyme]-L-cysteine = [E1 ubiquitin-activating enzyme]-L-cysteine + S-ubiquitinyl-[E2 ubiquitin-conjugating enzyme]-L-cysteine.. It participates in protein modification; protein ubiquitination. Functionally, catalyzes the covalent attachment of ubiquitin or ISG15 to other proteins. Functions in the E6/E6-AP-induced ubiquitination of p53/TP53. Promotes ubiquitination and subsequent proteasomal degradation of FLT3. This Homo sapiens (Human) protein is Ubiquitin/ISG15-conjugating enzyme E2 L6 (UBE2L6).